The following is a 368-amino-acid chain: Zinc finger protein 24 (368 aa).

A Glycyl lysine isopeptide (Lys-Gly) (interchain with G-Cter in SUMO2) cross-link involves residue lysine 22. A Glycyl lysine isopeptide (Lys-Gly) (interchain with G-Cter in SUMO1); alternate cross-link involves residue lysine 27. A Glycyl lysine isopeptide (Lys-Gly) (interchain with G-Cter in SUMO2); alternate cross-link involves residue lysine 27. Residues 52–134 (RQRFRQFGYQ…TVLEDLESEL (83 aa)) enclose the SCAN box domain. Phosphoserine is present on residues serine 132 and serine 142. Residues lysine 147, lysine 177, and lysine 236 each participate in a glycyl lysine isopeptide (Lys-Gly) (interchain with G-Cter in SUMO2) cross-link. Residues 251–273 (HICDECGKHFSQGSALILHQRIH) form a C2H2-type 1 zinc finger. The tract at residues 251-301 (HICDECGKHFSQGSALILHQRIHSGEKPYGCVECGKAFSRSSILVQHQRVH) is necessary and sufficient for nuclear localization. Phosphoserine is present on serine 274. Glycyl lysine isopeptide (Lys-Gly) (interchain with G-Cter in SUMO2) cross-links involve residues lysine 277 and lysine 286. 3 C2H2-type zinc fingers span residues 279 to 301 (YGCV…QRVH), 307 to 329 (YKCL…QRIH), and 335 to 357 (YECV…QRRH). Position 292 is a phosphoserine (serine 292). The residue at position 335 (tyrosine 335) is a Phosphotyrosine. Glycyl lysine isopeptide (Lys-Gly) (interchain with G-Cter in SUMO2) cross-links involve residues lysine 361 and lysine 367.

It belongs to the krueppel C2H2-type zinc-finger protein family. Sumoylated.

The protein localises to the nucleus. Functionally, transcription factor required for myelination of differentiated oligodendrocytes. Required for the conversion of oligodendrocytes from the premyelinating to the myelinating state. In the developing central nervous system (CNS), involved in the maintenance in the progenitor stage by promoting the cell cycle. Specifically binds to the 5'-TCAT-3' DNA sequence. Has transcription repressor activity in vitro. The sequence is that of Zinc finger protein 24 (ZNF24) from Pongo abelii (Sumatran orangutan).